The chain runs to 69 residues: Conotoxin Cal12.1p4 (69 aa).

Positions aspartate 1–threonine 23 are excised as a propeptide.

Post-translationally, contains 4 disulfide bonds. Expressed by the venom duct.

It is found in the secreted. In Californiconus californicus (California cone), this protein is Conotoxin Cal12.1p4.